The chain runs to 280 residues: Eukaryotic translation initiation factor 3 subunit F-1 (280 aa).

Positions 8-138 (VRVHPVVLFQ…LRAYVCIQLG (131 aa)) constitute an MPN domain.

Belongs to the eIF-3 subunit F family. As to quaternary structure, component of the eukaryotic translation initiation factor 3 (eIF-3) complex. The eIF-3 complex interacts with pix.

The protein localises to the cytoplasm. In terms of biological role, component of the eukaryotic translation initiation factor 3 (eIF-3) complex, which is involved in protein synthesis of a specialized repertoire of mRNAs and, together with other initiation factors, stimulates binding of mRNA and methionyl-tRNAi to the 40S ribosome. The eIF-3 complex specifically targets and initiates translation of a subset of mRNAs involved in cell proliferation. The polypeptide is Eukaryotic translation initiation factor 3 subunit F-1 (Drosophila yakuba (Fruit fly)).